Consider the following 215-residue polypeptide: MAVFLLDKPLFLHILTQLRDIKTDQIMFRKGMVRLGRLIGYEIANHLDFDIVKVVTPLGVEAKGVVIKDLDNIMIVNVLRAATPLVEGLLKAFPAAKQGVVAASRREMESSSPPTEMEVEITYMKIPKISKNDIAIIADPMIATASTMMRILGMVSQLQPKRIIIASVIASEYGITKIRNKYPDVDIFTVSIDPEINNRGYIVPGLGDAGDRSFG.

A GTP-binding site is contributed by Lys-30 to Arg-34. Residues Arg-80, Arg-105, and Asp-139–Thr-147 contribute to the 5-phospho-alpha-D-ribose 1-diphosphate site. Uracil is bound by residues Ile-202 and Gly-207–Ala-209. Asp-208 provides a ligand contact to 5-phospho-alpha-D-ribose 1-diphosphate.

This sequence belongs to the UPRTase family. Mg(2+) serves as cofactor.

The catalysed reaction is UMP + diphosphate = 5-phospho-alpha-D-ribose 1-diphosphate + uracil. The protein operates within pyrimidine metabolism; UMP biosynthesis via salvage pathway; UMP from uracil: step 1/1. Allosterically activated by GTP. Catalyzes the conversion of uracil and 5-phospho-alpha-D-ribose 1-diphosphate (PRPP) to UMP and diphosphate. The chain is Uracil phosphoribosyltransferase from Metallosphaera sedula (strain ATCC 51363 / DSM 5348 / JCM 9185 / NBRC 15509 / TH2).